The following is a 118-amino-acid chain: Small ribosomal subunit protein uS13 (118 aa).

Residues 94 to 118 (GLPVRGQRTKTNARTRKGPRKPIKK) form a disordered region.

It belongs to the universal ribosomal protein uS13 family. As to quaternary structure, part of the 30S ribosomal subunit. Forms a loose heterodimer with protein S19. Forms two bridges to the 50S subunit in the 70S ribosome.

Its function is as follows. Located at the top of the head of the 30S subunit, it contacts several helices of the 16S rRNA. In the 70S ribosome it contacts the 23S rRNA (bridge B1a) and protein L5 of the 50S subunit (bridge B1b), connecting the 2 subunits; these bridges are implicated in subunit movement. Contacts the tRNAs in the A and P-sites. This Histophilus somni (strain 129Pt) (Haemophilus somnus) protein is Small ribosomal subunit protein uS13.